Reading from the N-terminus, the 213-residue chain is Orotate phosphoribosyltransferase (213 aa).

Residue K26 coordinates 5-phospho-alpha-D-ribose 1-diphosphate. An orotate-binding site is contributed by F34 to F35. 5-phospho-alpha-D-ribose 1-diphosphate is bound by residues Y72–K73, R99, K100, K103, H105, and D124–A132. The orotate site is built by T128 and R156.

This sequence belongs to the purine/pyrimidine phosphoribosyltransferase family. PyrE subfamily. Homodimer. It depends on Mg(2+) as a cofactor.

It catalyses the reaction orotidine 5'-phosphate + diphosphate = orotate + 5-phospho-alpha-D-ribose 1-diphosphate. The protein operates within pyrimidine metabolism; UMP biosynthesis via de novo pathway; UMP from orotate: step 1/2. Functionally, catalyzes the transfer of a ribosyl phosphate group from 5-phosphoribose 1-diphosphate to orotate, leading to the formation of orotidine monophosphate (OMP). This chain is Orotate phosphoribosyltransferase, found in Escherichia coli O157:H7.